The primary structure comprises 364 residues: Methylthioribose-1-phosphate isomerase (364 aa).

D254 acts as the Proton donor in catalysis.

This sequence belongs to the eIF-2B alpha/beta/delta subunits family. MtnA subfamily.

Its subcellular location is the cytoplasm. It localises to the nucleus. The catalysed reaction is 5-(methylsulfanyl)-alpha-D-ribose 1-phosphate = 5-(methylsulfanyl)-D-ribulose 1-phosphate. It functions in the pathway amino-acid biosynthesis; L-methionine biosynthesis via salvage pathway; L-methionine from S-methyl-5-thio-alpha-D-ribose 1-phosphate: step 1/6. Its function is as follows. Catalyzes the interconversion of methylthioribose-1-phosphate (MTR-1-P) into methylthioribulose-1-phosphate (MTRu-1-P). The polypeptide is Methylthioribose-1-phosphate isomerase (Drosophila erecta (Fruit fly)).